A 253-amino-acid polypeptide reads, in one-letter code: U1 small nuclear ribonucleoprotein A (253 aa).

The region spanning valine 23 to threonine 102 is the RRM 1 domain. Residues aspartate 111 to serine 140 are disordered. Residues asparagine 179–lysine 253 enclose the RRM 2 domain.

It belongs to the RRM U1 A/B'' family. Component of the spliceosome where it is associated with snRNP U1.

It localises to the nucleus. It is found in the nucleolus. Involved in nuclear pre-mRNA splicing. This Oryza sativa subsp. indica (Rice) protein is U1 small nuclear ribonucleoprotein A.